A 105-amino-acid polypeptide reads, in one-letter code: Large ribosomal subunit protein P1 (105 aa).

A Blocked amino end (Met) modification is found at M1. The span at 65–76 (VAAPAGQQTQQA) shows a compositional bias: low complexity. The interval 65–105 (VAAPAGQQTQQAAEKKEEKKEEEKKGPSEEEIGGGLSSLFG) is disordered. A compositionally biased stretch (basic and acidic residues) spans 77 to 92 (AEKKEEKKEEEKKGPS).

This sequence belongs to the eukaryotic ribosomal protein P1/P2 family. In terms of assembly, part of the 50S ribosomal subunit. Homodimer, it forms part of the ribosomal stalk which helps the ribosome interact with GTP-bound translation factors. Forms a heptameric uL10/P0(P1)2(P1)2(P1)2 complex, where uL10/P0 forms an elongated spine to which the P1 dimers bind in a sequential fashion.

In terms of biological role, forms part of the ribosomal stalk, playing a central role in the interaction of the ribosome with GTP-bound translation factors. This Sulfolobus acidocaldarius (strain ATCC 33909 / DSM 639 / JCM 8929 / NBRC 15157 / NCIMB 11770) protein is Large ribosomal subunit protein P1.